The chain runs to 475 residues: Ribulose bisphosphate carboxylase large chain (475 aa).

A propeptide spanning residues 1-2 (MS) is cleaved from the precursor. An N-acetylproline modification is found at Pro3. Positions 123 and 173 each coordinate substrate. Lys175 serves as the catalytic Proton acceptor. Residue Lys177 participates in substrate binding. The Mg(2+) site is built by Lys201, Asp203, and Glu204. At Lys201 the chain carries N6-carboxylysine. Residue His294 is the Proton acceptor of the active site. Arg295, His327, and Ser379 together coordinate substrate.

It belongs to the RuBisCO large chain family. Type I subfamily. In terms of assembly, heterohexadecamer of 8 large chains and 8 small chains; disulfide-linked. The disulfide link is formed within the large subunit homodimers. It depends on Mg(2+) as a cofactor. In terms of processing, the disulfide bond which can form in the large chain dimeric partners within the hexadecamer appears to be associated with oxidative stress and protein turnover.

Its subcellular location is the plastid. It is found in the chloroplast. It catalyses the reaction 2 (2R)-3-phosphoglycerate + 2 H(+) = D-ribulose 1,5-bisphosphate + CO2 + H2O. The catalysed reaction is D-ribulose 1,5-bisphosphate + O2 = 2-phosphoglycolate + (2R)-3-phosphoglycerate + 2 H(+). RuBisCO catalyzes two reactions: the carboxylation of D-ribulose 1,5-bisphosphate, the primary event in carbon dioxide fixation, as well as the oxidative fragmentation of the pentose substrate in the photorespiration process. Both reactions occur simultaneously and in competition at the same active site. The polypeptide is Ribulose bisphosphate carboxylase large chain (Welwitschia mirabilis (Tree tumbo)).